The primary structure comprises 592 residues: Glutamine-rich protein 2 (592 aa).

Positions 488–592 (QLQQAQHARP…TRGPRSTAAH (105 aa)) are disordered. Over residues 544–567 (LQSNVSHSSIPTDIASLQGSQQGL) the composition is skewed to polar residues.

Interacts with AKAP3, ODF2 and TSSK4. Interacts with AKAP4. As to expression, expressed in testis. Not detected in heart, brain, kidney, stomach, ovary, liver, lung and uterus.

The protein localises to the nucleus membrane. It localises to the nucleus. It is found in the cytoplasm. The protein resides in the cell projection. Its subcellular location is the cilium. The protein localises to the flagellum. In terms of biological role, has an essential role in the formation of sperm flagella and flagellar structure maintainance. It acts as a suppressor of ubiquitination and degradation of proteins involved in flagellar development and motility. This chain is Glutamine-rich protein 2, found in Mus musculus (Mouse).